The sequence spans 163 residues: Phosphopantetheine adenylyltransferase (163 aa).

Ser9 contributes to the substrate binding site. ATP contacts are provided by residues 9–10 (SF) and His17. Positions 41, 73, and 87 each coordinate substrate. ATP-binding positions include 88-90 (GLR), Glu98, and 123-129 (YSYLSSS).

It belongs to the bacterial CoaD family. As to quaternary structure, homohexamer. Requires Mg(2+) as cofactor.

The protein resides in the cytoplasm. It catalyses the reaction (R)-4'-phosphopantetheine + ATP + H(+) = 3'-dephospho-CoA + diphosphate. It participates in cofactor biosynthesis; coenzyme A biosynthesis; CoA from (R)-pantothenate: step 4/5. Reversibly transfers an adenylyl group from ATP to 4'-phosphopantetheine, yielding dephospho-CoA (dPCoA) and pyrophosphate. This is Phosphopantetheine adenylyltransferase from Lachnoclostridium phytofermentans (strain ATCC 700394 / DSM 18823 / ISDg) (Clostridium phytofermentans).